The chain runs to 500 residues: Na(+)/H(+) antiporter NhaB (500 aa).

Transmembrane regions (helical) follow at residues 11-31, 34-54, 58-78, 96-116, 129-149, 150-170, 205-225, 241-261, 311-331, 350-370, 394-414, 450-470, and 477-497; these read HGFLGQSPLWYKAIICLFLVL, LLLVTVGPVAAGWALVLEFIF, MALKCYPLMPGGLLLVEALLL, VILLLMFMVAGIHFMKELLLF, AILSLLFCVLSAFLSAFLDAL, TVTAVIISAAVGFYAVYHRVA, LLMHGAVGTALGGVCTLVGEP, FFFKVAPVSLPVLGAGLLTCV, ILIICLGLHVAEVGLIGLMVI, FQDAMPFTSLLVVFFAVVAVI, MLYLANGLLSAISDNVFVATI, ATPNGQAAFLFLLTSAIAPLI, and MVWMALPYTVVMGGLGWWAVT.

This sequence belongs to the NhaB Na(+)/H(+) (TC 2.A.34) antiporter family.

It is found in the cell inner membrane. The catalysed reaction is 2 Na(+)(in) + 3 H(+)(out) = 2 Na(+)(out) + 3 H(+)(in). Functionally, na(+)/H(+) antiporter that extrudes sodium in exchange for external protons. The sequence is that of Na(+)/H(+) antiporter NhaB from Pseudomonas putida (strain GB-1).